The sequence spans 1116 residues: DUB-associated factor 1 (1116 aa).

WD repeat units follow at residues 21–62, 91–132, 160–200, 219–262, 266–305, 387–426, and 428–466; these read AHIL…NEPE, KNSD…DHDD, VHDG…EKMA, SMSP…EVIR, AHRTNIKVVRTLDDSTRLISTSSDGVINVWDLNCRHDQTT, KKYGGILDIALLPNEKLLFSFCTDSNLNVLDLTNNHFSVN, and GGFALTRSSLLTNRRHVITENTKGQMQRWDIVSCELLNT. A disordered region spans residues 578–600; the sequence is LDTGYNSESKKNNKDKKRKSTFK. S668 bears the Phosphoserine mark. Phosphothreonine is present on T693. Residues 747-776 show a composition bias toward polar residues; it reads ISSQDLPSNNTHNKLRSSENSRANSTSTLE. 2 disordered regions span residues 747 to 784 and 963 to 994; these read ISSQDLPSNNTHNKLRSSENSRANSTSTLEGNEKKKPE and FISASDTTESSGNDSSDSSLGNGNEAVSPSTQ. Residues 967–987 are compositionally biased toward low complexity; the sequence is SDTTESSGNDSSDSSLGNGNE.

Interacts (via its WD repeats) with ubiquitin.

It is found in the cytoplasm. Its function is as follows. Ubiquitin-binding protein involved in the resistance to phenanthroline, sanguinarine, nordihydroguaiaretic acid (NDGA), isopropyl (N-3-chloro-phenyl)-carbamate (IPCPC) and guanosine 5'-O-(2-thiodiphosphate). In Saccharomyces cerevisiae (strain ATCC 204508 / S288c) (Baker's yeast), this protein is DUB-associated factor 1.